Consider the following 423-residue polypeptide: COP9 signalosome complex subunit 3 (423 aa).

A PCI domain is found at 197-365 (NFERALYFYE…GMVCFHDNPE (169 aa)). The segment at 402–423 (QFVQKSMGSQEDDSGTKPSSYS) is disordered.

It belongs to the CSN3 family. As to quaternary structure, component of the CSN complex, probably composed of COPS1, COPS2, COPS3, COPS4, COPS5, COPS6, COPS7, COPS8 and COPS9.

The protein resides in the cytoplasm. It localises to the nucleus. In terms of biological role, component of the COP9 signalosome complex (CSN), a complex involved in various cellular and developmental processes. The CSN complex is an essential regulator of the ubiquitin (Ubl) conjugation pathway by mediating the deneddylation of the cullin subunits of E3 ligase complexes, leading to modify the Ubl ligase activity. The chain is COP9 signalosome complex subunit 3 (COPS3) from Gallus gallus (Chicken).